The sequence spans 273 residues: Ribosomal protein L11 methyltransferase (273 aa).

S-adenosyl-L-methionine contacts are provided by threonine 112, glycine 133, aspartate 155, and asparagine 203.

The protein belongs to the methyltransferase superfamily. PrmA family.

The protein localises to the cytoplasm. The catalysed reaction is L-lysyl-[protein] + 3 S-adenosyl-L-methionine = N(6),N(6),N(6)-trimethyl-L-lysyl-[protein] + 3 S-adenosyl-L-homocysteine + 3 H(+). Functionally, methylates ribosomal protein L11. The sequence is that of Ribosomal protein L11 methyltransferase from Deinococcus radiodurans (strain ATCC 13939 / DSM 20539 / JCM 16871 / CCUG 27074 / LMG 4051 / NBRC 15346 / NCIMB 9279 / VKM B-1422 / R1).